A 990-amino-acid polypeptide reads, in one-letter code: MASSTATVSLHNLVKLCCKRNSTSKVFVSLYNQLEEKSPIQDNDYLSNLLQPDIKNKSKRESSLITEYILALAISSESQLEKFWKFLPEILLENQIHYMIELNSILLSKSNIERPSSDIFKEIVNNCFFKYTSSYISSLFPGISATQVSLLNHIIVVWCSVIRRSPFHLNTSSFKQLAVKIVSVLTECDLRNSLNYFISNTSSILNTDDLQVDSVQDSDDKKIAAIRSTTTIQLVNNISSINPKSRKATQLNVIKRYLWLNSIMKNWKFSNDVFLKQFEQNFLPNSSNNLKKPYVLAFELICAFFKGIVTSICSNESKYVLFNWKNFIITRLPTLLNDIKFTTSHVAPTSNDSSFKQETLDDAIINAFESFEDPVNKVLTQFSIDNLSICDLRQTFIKSCIYNKLIPVMSYHKIFTADNTVTDQFLNNGIEQVGQITSIRDEFETKLLNINTEFTTLEDSGLIEYINSLPGLLEFSATKQLELSETVDQVIEHLIDEKNIEKLYRLLLSVCNNLTTLNLICFNSNCGPFSILYKLINYIDNEDFNVDDDDNFQETYAFFGIIILAILLIIETFKIDYSQITVTNSYIVDYINEFYYRLCDSLTNISTSDTEEDNTIISNYNDLISDWINALFDDNNDGLSDDLIKSVNVKQIYKMIPIIYQQSIIATNSNKIDIKILNNGIDYLSQMFLIPCTLNIIKWLLRRIWADDPTLDCLPVQVLHELIKSNMGESDEPTSESKLFFQIVLKISGNSIISTLKKLNNWENSNLIKDIIEKVSNSVDPMYLENDLSIKLNERVNLYEQLKTNVINLVNNMNIYDYQFLNIFSSIDRDNELIRYIVEEITSYQKTNGGNEDTKLFINLSIFMILLDAIDNDDDKQYWIKRIKDTMVPVSSNSSGENRFDISMDYHYSSIFNNSDETSNNDYLFSGENNNSSVEIEGLKRKIGRHESLLNSFNKIKEFCDTEVQSTFVKSLRTFRDKLINELEVFTLNV.

The protein belongs to the Mediator complex subunit 5 family. In terms of assembly, component of the Mediator complex.

Its subcellular location is the nucleus. Its function is as follows. Component of the Mediator complex, a coactivator involved in the regulated transcription of nearly all RNA polymerase II-dependent genes. Mediator functions as a bridge to convey information from gene-specific regulatory proteins to the basal RNA polymerase II transcription machinery. Mediator is recruited to promoters by direct interactions with regulatory proteins and serves as a scaffold for the assembly of a functional preinitiation complex with RNA polymerase II and the general transcription factors. This Debaryomyces hansenii (strain ATCC 36239 / CBS 767 / BCRC 21394 / JCM 1990 / NBRC 0083 / IGC 2968) (Yeast) protein is Mediator of RNA polymerase II transcription subunit 5 (NUT1).